The chain runs to 67 residues: Large ribosomal subunit protein bL35 (67 aa).

This sequence belongs to the bacterial ribosomal protein bL35 family.

The protein is Large ribosomal subunit protein bL35 of Novosphingobium aromaticivorans (strain ATCC 700278 / DSM 12444 / CCUG 56034 / CIP 105152 / NBRC 16084 / F199).